We begin with the raw amino-acid sequence, 103 residues long: Small ribosomal subunit protein uS10 (103 aa).

The protein belongs to the universal ribosomal protein uS10 family. Part of the 30S ribosomal subunit.

In terms of biological role, involved in the binding of tRNA to the ribosomes. The chain is Small ribosomal subunit protein uS10 from Acidovorax sp. (strain JS42).